Consider the following 432-residue polypeptide: Serine--tRNA ligase (432 aa).

237-239 (TSE) contributes to the L-serine binding site. Residue 268 to 270 (RSE) coordinates ATP. L-serine is bound at residue E291. Position 355 to 358 (355 to 358 (EISS)) interacts with ATP. S390 contributes to the L-serine binding site.

It belongs to the class-II aminoacyl-tRNA synthetase family. Type-1 seryl-tRNA synthetase subfamily. In terms of assembly, homodimer. The tRNA molecule binds across the dimer.

It is found in the cytoplasm. It carries out the reaction tRNA(Ser) + L-serine + ATP = L-seryl-tRNA(Ser) + AMP + diphosphate + H(+). The enzyme catalyses tRNA(Sec) + L-serine + ATP = L-seryl-tRNA(Sec) + AMP + diphosphate + H(+). The protein operates within aminoacyl-tRNA biosynthesis; selenocysteinyl-tRNA(Sec) biosynthesis; L-seryl-tRNA(Sec) from L-serine and tRNA(Sec): step 1/1. Its function is as follows. Catalyzes the attachment of serine to tRNA(Ser). Is also able to aminoacylate tRNA(Sec) with serine, to form the misacylated tRNA L-seryl-tRNA(Sec), which will be further converted into selenocysteinyl-tRNA(Sec). The protein is Serine--tRNA ligase of Methylobacillus flagellatus (strain ATCC 51484 / DSM 6875 / VKM B-1610 / KT).